The primary structure comprises 356 residues: Serendipity locus protein beta (356 aa).

Residues 171-193 (IPCHICGEMFSSQEVLERHIKAD) form a C2H2-type 1; degenerate zinc finger. C2H2-type zinc fingers lie at residues 201–223 (ATCN…MNLH), 229–251 (LECR…MEVH), 257–279 (YQCD…LMRH), 286–308 (LICE…LRTH), and 315–337 (YPCP…KRVH).

As to quaternary structure, binds chromatin; requires N-terminal regions to form protein-protein contacts, in addition to DNA specific recognition by the zinc fingers.

It is found in the nucleus. Binds to the consensus DNA sequence 5'-YCAGAGATGCGCA-3'. The sequence is that of Serendipity locus protein beta (Sry-beta) from Drosophila melanogaster (Fruit fly).